We begin with the raw amino-acid sequence, 163 residues long: Cyanate hydratase (163 aa).

Active-site residues include Arg103, Glu106, and Ser129.

This sequence belongs to the cyanase family.

The catalysed reaction is cyanate + hydrogencarbonate + 3 H(+) = NH4(+) + 2 CO2. Catalyzes the reaction of cyanate with bicarbonate to produce ammonia and carbon dioxide. The chain is Cyanate hydratase from Ajellomyces capsulatus (strain G186AR / H82 / ATCC MYA-2454 / RMSCC 2432) (Darling's disease fungus).